The sequence spans 475 residues: Lipoprotein lipase (475 aa).

A signal peptide spans 1-27; the sequence is MESKALLLVALGMWFQSLTATRGGVAA. The tract at residues 32-53 is interaction with GPIHBP1; it reads GDFIDIESKFALRTPEDTAEDT. A disulfide bond links Cys54 and Cys67. Asn70 is a glycosylation site (N-linked (GlcNAc...) asparagine). Position 121 is a 3'-nitrotyrosine (Tyr121). The active-site Nucleophile is the Ser159. The Charge relay system role is filled by Asp183. Position 191 is a 3'-nitrotyrosine (Tyr191). 4 residues coordinate Ca(2+): Ala194, Arg197, Ser199, and Asp202. A disulfide bridge links Cys243 with Cys266. His268 functions as the Charge relay system in the catalytic mechanism. 2 disulfides stabilise this stretch: Cys291-Cys310 and Cys302-Cys305. A PLAT domain is found at 341–464; the sequence is FHYQVKIHFS…KGKASVVFVK (124 aa). Tyr343 bears the 3'-nitrotyrosine mark. Asn386 carries N-linked (GlcNAc...) asparagine glycosylation. The tract at residues 417–421 is important for interaction with lipoprotein particles; sequence WSDWW. Residues 430 to 434 are important for heparin binding; the sequence is KIRVK. The tract at residues 443–467 is interaction with GPIHBP1; it reads IFCSREKVSHLQKGKASVVFVKCHD. A disulfide bond links Cys445 and Cys465.

Belongs to the AB hydrolase superfamily. Lipase family. Homodimer. Interacts with GPIHBP1 with 1:1 stoichiometry. Interacts with APOC2; the interaction activates LPL activity in the presence of lipids. Interaction with heparan sulfate proteoglycans is required to protect LPL against loss of activity. Associates with lipoprotein particles in blood plasma. Interacts with LMF1 and SEL1L; interaction with SEL1L is required to prevent aggregation of newly synthesized LPL in the endoplasmic reticulum (ER), and for normal export of LPL from the ER to the extracellular space. Interacts with SORL1; SORL1 acts as a sorting receptor, promoting LPL localization to endosomes and later to lysosomes, leading to degradation of newly synthesized LPL. Post-translationally, tyrosine nitration after lipopolysaccharide (LPS) challenge down-regulates the lipase activity.

It is found in the cell membrane. It localises to the secreted. The protein localises to the extracellular space. The protein resides in the extracellular matrix. It carries out the reaction a triacylglycerol + H2O = a diacylglycerol + a fatty acid + H(+). With respect to regulation, the apolipoprotein APOC2 acts as a coactivator of LPL activity. Ca(2+) binding promotes protein stability and formation of the active homodimer. Interaction with GPIHBP1 protects LPL against inactivation by ANGPTL4. Key enzyme in triglyceride metabolism. Catalyzes the hydrolysis of triglycerides from circulating chylomicrons and very low density lipoproteins (VLDL), and thereby plays an important role in lipid clearance from the blood stream, lipid utilization and storage. Mediates margination of triglyceride-rich lipoprotein particles in capillaries. Recruited to its site of action on the luminal surface of vascular endothelium by binding to GPIHBP1 and cell surface heparan sulfate proteoglycans. The protein is Lipoprotein lipase (LPL) of Neovison vison (American mink).